Reading from the N-terminus, the 303-residue chain is Large ribosomal subunit protein uL1m (303 aa).

It belongs to the universal ribosomal protein uL1 family. As to quaternary structure, component of the mitochondrial large ribosomal subunit (mt-LSU). Mature N.crassa 74S mitochondrial ribosomes consist of a small (37S) and a large (54S) subunit. The 37S small subunit contains a 16S ribosomal RNA (16S mt-rRNA) and 32 different proteins. The 54S large subunit contains a 23S rRNA (23S mt-rRNA) and 42 different proteins.

The protein resides in the mitochondrion. Component of the mitochondrial ribosome (mitoribosome), a dedicated translation machinery responsible for the synthesis of mitochondrial genome-encoded proteins, including at least some of the essential transmembrane subunits of the mitochondrial respiratory chain. The mitoribosomes are attached to the mitochondrial inner membrane and translation products are cotranslationally integrated into the membrane. This chain is Large ribosomal subunit protein uL1m (mrpl1), found in Neurospora crassa (strain ATCC 24698 / 74-OR23-1A / CBS 708.71 / DSM 1257 / FGSC 987).